A 604-amino-acid polypeptide reads, in one-letter code: Beta-alanine transporter (604 aa).

The Cytoplasmic portion of the chain corresponds to 1 to 23; the sequence is MDFDEVLREVGSFGLYQKVIICS. A helical membrane pass occupies residues 24–44; it reads VLLPAALPCAFHAYSQLFIAA. Over 45 to 151 the chain is Extracellular; it reads TPQHFCRVPE…QEWNLVCDRS (107 aa). N-linked (GlcNAc...) asparagine glycans are attached at residues Asn-68 and Asn-88. A helical transmembrane segment spans residues 152-172; sequence FLVTLALVVFGVGGLLGNYVF. Over 173-182 the chain is Cytoplasmic; sequence GYLVDLWGRR. A helical transmembrane segment spans residues 183–203; that stretch reads PSFYAYLLLEIIACAASAFAW. Topologically, residues 204–212 are extracellular; that stretch reads NYYTWLGLR. The chain crosses the membrane as a helical span at residues 213–233; the sequence is FVVGLTVPAILASPYVLAIEL. Residues 234-243 lie on the Cytoplasmic side of the membrane; sequence VGPERRVFCT. A helical membrane pass occupies residues 244–264; sequence IVSNIAYSLGLVVLAGVIYIV. The Extracellular portion of the chain corresponds to 265-268; that stretch reads RDWR. Residues 269 to 289 traverse the membrane as a helical segment; sequence ELSLAVSMPLLMLFSCFFVLP. At 290 to 362 the chain is on the cytoplasmic side; the sequence is ESPRWLMAVG…FRGPNMRRKT (73 aa). A helical transmembrane segment spans residues 363–383; the sequence is LIITLIWFANTSVYVGLSYYA. Topologically, residues 384-390 are extracellular; it reads PALGGDE. A helical transmembrane segment spans residues 391–411; sequence IWNFFLAGAVELPTYLLLWPG. Over 412-418 the chain is Cytoplasmic; that stretch reads LSYFGRR. Residues 419–439 traverse the membrane as a helical segment; the sequence is WILFISMLVGGVACVATFLYP. Residues 440–442 lie on the Extracellular side of the membrane; that stretch reads DIT. Residues 443 to 463 form a helical membrane-spanning segment; the sequence is LLLYCVGKMGISSSFVVLPLM. The Cytoplasmic segment spans residues 464–473; it reads ASELYPTVVR. Residues 474–494 traverse the membrane as a helical segment; it reads GLGMSFSSVISMVGPIVIPMI. Over 495–501 the chain is Extracellular; it reads NHMGQQM. Residues 502-522 traverse the membrane as a helical segment; that stretch reads LVLPLIVMGALLILGGFASLL. The Cytoplasmic portion of the chain corresponds to 523-604; that stretch reads LPETRNRNLP…SICKNEMRTL (82 aa).

The protein belongs to the major facilitator (TC 2.A.1) superfamily. Organic cation transporter (TC 2.A.1.19) family. Expressed in the head and predominantly in the retinal pigment cells of the compound eye.

The protein resides in the cell membrane. Beta-alanine transporter required for the uptake of beta-alanine by the glia. Required for the recycling process of the neurotransmitter histamine in photoreceptor neurons of the compound eye and therefore for photoreceptor synaptic transmission. Following histamine release from photoreceptors and its uptake by glia, histamine is conjugated to beta-alanine by e/Ebony to form the inactive metabolite, carcinine. This is Beta-alanine transporter from Drosophila melanogaster (Fruit fly).